Here is a 275-residue protein sequence, read N- to C-terminus: Putative rhamnulose-1-phosphate aldolase (275 aa).

The active site involves glutamate 117. Residues histidine 141, histidine 143, and histidine 212 each contribute to the Zn(2+) site.

The protein belongs to the aldolase class II family. RhaD subfamily. As to quaternary structure, homotetramer. Zn(2+) is required as a cofactor.

It localises to the cytoplasm. The catalysed reaction is L-rhamnulose 1-phosphate = (S)-lactaldehyde + dihydroxyacetone phosphate. Its pathway is carbohydrate degradation; L-rhamnose degradation; glycerone phosphate from L-rhamnose: step 3/3. Its function is as follows. Catalyzes the reversible cleavage of L-rhamnulose-1-phosphate to dihydroxyacetone phosphate (DHAP) and L-lactaldehyde. This Salmonella typhi protein is Putative rhamnulose-1-phosphate aldolase.